Consider the following 292-residue polypeptide: Elongation factor Ts (292 aa).

The interval 80–83 is involved in Mg(2+) ion dislocation from EF-Tu; the sequence is TDFV.

Belongs to the EF-Ts family.

It localises to the cytoplasm. Associates with the EF-Tu.GDP complex and induces the exchange of GDP to GTP. It remains bound to the aminoacyl-tRNA.EF-Tu.GTP complex up to the GTP hydrolysis stage on the ribosome. This Cupriavidus necator (strain ATCC 17699 / DSM 428 / KCTC 22496 / NCIMB 10442 / H16 / Stanier 337) (Ralstonia eutropha) protein is Elongation factor Ts.